Consider the following 689-residue polypeptide: Pentatricopeptide repeat-containing protein At1g71460, chloroplastic (689 aa).

The N-terminal 49 residues, 1 to 49 (MEVVSSLGIRDLPASLSVTTSLNHRPHRSDKDGAPAKSPIRPSRTRRPS), are a transit peptide targeting the chloroplast. Positions 16–68 (LSVTTSLNHRPHRSDKDGAPAKSPIRPSRTRRPSTSPAKKPKPFRERDAFPSS) are disordered. Residues 38-52 (SPIRPSRTRRPSTSP) are compositionally biased toward low complexity. 18 PPR repeats span residues 75 to 109 (NPYI…GIPV), 110 to 144 (NATT…GLES), 145 to 175 (NEFL…STSS), 176 to 212 (NVYS…GVDL), 213 to 247 (NVYS…GLFN), 248 to 282 (SVFL…DIVV), 283 to 309 (WGAM…MISE), 315 to 350 (NSVI…NYVE), 351 to 381 (QPFV…SKQR), 382 to 416 (NAIS…GFRP), 417 to 451 (DVVT…LFLP), 452 to 482 (NVSL…LEQR), 483 to 517 (NVKA…KHRP), 518 to 552 (DSVT…EFES), 553 to 583 (IPFV…VAVK), 584 to 618 (GSLT…GFTP), 619 to 649 (NTFT…MLRM), and 655 to 689 (SEEH…SLQT).

It belongs to the PPR family. PCMP-A subfamily.

The protein localises to the plastid. It localises to the chloroplast. The sequence is that of Pentatricopeptide repeat-containing protein At1g71460, chloroplastic (PCMP-A3) from Arabidopsis thaliana (Mouse-ear cress).